A 378-amino-acid polypeptide reads, in one-letter code: Chaperone protein DnaJ (378 aa).

In terms of domain architecture, J spans 5 to 70 (DYYETLGVSQ…QKRAAYDQYG (66 aa)). A CR-type zinc finger spans residues 134–212 (GKSLEIKVPT…CRGQGRVEKT (79 aa)). Zn(2+) contacts are provided by Cys147, Cys150, Cys164, Cys167, Cys186, Cys189, Cys200, and Cys203. CXXCXGXG motif repeat units lie at residues 147 to 154 (CEPCDGSG), 164 to 171 (CSTCHGHG), 186 to 193 (CPTCSGKG), and 200 to 207 (CTSCRGQG).

It belongs to the DnaJ family. Homodimer. Zn(2+) is required as a cofactor.

The protein resides in the cytoplasm. In terms of biological role, participates actively in the response to hyperosmotic and heat shock by preventing the aggregation of stress-denatured proteins and by disaggregating proteins, also in an autonomous, DnaK-independent fashion. Unfolded proteins bind initially to DnaJ; upon interaction with the DnaJ-bound protein, DnaK hydrolyzes its bound ATP, resulting in the formation of a stable complex. GrpE releases ADP from DnaK; ATP binding to DnaK triggers the release of the substrate protein, thus completing the reaction cycle. Several rounds of ATP-dependent interactions between DnaJ, DnaK and GrpE are required for fully efficient folding. Also involved, together with DnaK and GrpE, in the DNA replication of plasmids through activation of initiation proteins. The chain is Chaperone protein DnaJ from Colwellia psychrerythraea (strain 34H / ATCC BAA-681) (Vibrio psychroerythus).